The following is a 241-amino-acid chain: Uridylate kinase (241 aa).

Position 15-18 (15-18 (KLSG)) interacts with ATP. The involved in allosteric activation by GTP stretch occupies residues 23–28 (GSEGFG). UMP is bound at residue G57. Residues G58 and R62 each contribute to the ATP site. Residues D77 and 138-145 (TGNPFFTT) contribute to the UMP site. ATP is bound by residues T165, F171, and D174.

This sequence belongs to the UMP kinase family. Homohexamer.

The protein resides in the cytoplasm. The enzyme catalyses UMP + ATP = UDP + ADP. The protein operates within pyrimidine metabolism; CTP biosynthesis via de novo pathway; UDP from UMP (UMPK route): step 1/1. With respect to regulation, allosterically activated by GTP. Inhibited by UTP. Its function is as follows. Catalyzes the reversible phosphorylation of UMP to UDP. The protein is Uridylate kinase of Klebsiella pneumoniae subsp. pneumoniae (strain ATCC 700721 / MGH 78578).